The chain runs to 430 residues: Enolase (430 aa).

(2R)-2-phosphoglycerate is bound at residue Gln163. Glu205 serves as the catalytic Proton donor. Mg(2+) contacts are provided by Asp242, Glu286, and Asp313. Residues Lys338, Arg367, Ser368, and Lys389 each contribute to the (2R)-2-phosphoglycerate site. Lys338 acts as the Proton acceptor in catalysis.

Belongs to the enolase family. It depends on Mg(2+) as a cofactor.

It localises to the cytoplasm. It is found in the secreted. The protein resides in the cell surface. The catalysed reaction is (2R)-2-phosphoglycerate = phosphoenolpyruvate + H2O. It functions in the pathway carbohydrate degradation; glycolysis; pyruvate from D-glyceraldehyde 3-phosphate: step 4/5. Its function is as follows. Catalyzes the reversible conversion of 2-phosphoglycerate (2-PG) into phosphoenolpyruvate (PEP). It is essential for the degradation of carbohydrates via glycolysis. The sequence is that of Enolase from Geotalea daltonii (strain DSM 22248 / JCM 15807 / FRC-32) (Geobacter daltonii).